The following is a 225-amino-acid chain: MSKNNSTVIKMDEQVLKYKEDLYEKTVHHLKVTIPKKIAEYQELAKSYGQNSENEQDGQTSKKRKLDSEDYVLMPIEDLIKTNRVIMETHQKFKKAYIELIETFSVIRGWISLNIPRIEDGNNFGVDVQEDIITQITKLEEVYTSLLDGSESYFASRASLVKKILKHKDIEAYRYSLAQVDEKEFTRFSFSYFDLANNYATTYSLIVKNFAKLETPRPTNASNIY.

This sequence belongs to the PA28 family. In terms of assembly, homoheptamer. The homoheptamer associates with the 20S proteasome.

The protein resides in the nucleus. In terms of biological role, subunit of the 11S REG (also called PA28) proteasome regulator, a doughnut-shaped homoheptamer which associates with the proteasome. 11S REG-gamma activates preferentially the trypsin-like catalytic subunit of the proteasome. May also be involved in cell cycle regulation. In Dictyostelium discoideum (Social amoeba), this protein is Proteasome activator 28 (psmE3).